The primary structure comprises 235 residues: Large ribosomal subunit protein uL1 (235 aa).

Belongs to the universal ribosomal protein uL1 family. In terms of assembly, part of the 50S ribosomal subunit.

Its function is as follows. Binds directly to 23S rRNA. The L1 stalk is quite mobile in the ribosome, and is involved in E site tRNA release. Functionally, protein L1 is also a translational repressor protein, it controls the translation of the L11 operon by binding to its mRNA. The polypeptide is Large ribosomal subunit protein uL1 (Methylobacterium nodulans (strain LMG 21967 / CNCM I-2342 / ORS 2060)).